Reading from the N-terminus, the 172-residue chain is MDHVNPTLFHLKSLSIFTLTLLYISSPHFLLFKTLSMYENLRIFLKIIPFNLFGMKSVSLIAILLLHLFVSSDTFQLDLFHCKYYLAITWLINRDNECVIYILVGSFICCIVICEVVDKASGSSIPDCSNACGPCKPCKLVVISSTCSASEACPLVYKCLCKGKYYHVPSLT.

An N-terminal signal peptide occupies residues 1 to 27; the sequence is MDHVNPTLFHLKSLSIFTLTLLYISSP. 4 cysteine pairs are disulfide-bonded: cysteine 128/cysteine 159, cysteine 132/cysteine 138, cysteine 135/cysteine 161, and cysteine 147/cysteine 153.

It belongs to the plant cysteine rich small secretory peptide family. Epidermal patterning factor subfamily.

The protein resides in the secreted. In terms of biological role, controls stomatal patterning. The chain is EPIDERMAL PATTERNING FACTOR-like protein 7 from Arabidopsis thaliana (Mouse-ear cress).